We begin with the raw amino-acid sequence, 469 residues long: Zinc finger and BTB domain-containing protein 8A.1-B (469 aa).

Residues 24-92 form the BTB domain; that stretch reads CDCHIIVEGQ…VYSGKLPLSG (69 aa). 2 consecutive C2H2-type zinc fingers follow at residues 315-337 and 343-366; these read FKCP…LRCH and YPCE…QTIH.

It localises to the nucleus. Its function is as follows. May be involved in transcriptional regulation. In Xenopus laevis (African clawed frog), this protein is Zinc finger and BTB domain-containing protein 8A.1-B (zbtb8a.1-b).